Consider the following 158-residue polypeptide: NADPH-dependent 7-cyano-7-deazaguanine reductase (158 aa).

The Thioimide intermediate role is filled by cysteine 56. Catalysis depends on aspartate 63, which acts as the Proton donor. Residues 78 to 80 (LES) and 97 to 98 (HE) contribute to the substrate site.

This sequence belongs to the GTP cyclohydrolase I family. QueF type 1 subfamily.

The protein localises to the cytoplasm. The catalysed reaction is 7-aminomethyl-7-carbaguanine + 2 NADP(+) = 7-cyano-7-deazaguanine + 2 NADPH + 3 H(+). The protein operates within tRNA modification; tRNA-queuosine biosynthesis. Its function is as follows. Catalyzes the NADPH-dependent reduction of 7-cyano-7-deazaguanine (preQ0) to 7-aminomethyl-7-deazaguanine (preQ1). The protein is NADPH-dependent 7-cyano-7-deazaguanine reductase of Rhodopseudomonas palustris (strain TIE-1).